An 851-amino-acid polypeptide reads, in one-letter code: DNA mismatch repair protein MutS (851 aa).

ATP is bound at residue 602–609 (GPNMSGKS).

The protein belongs to the DNA mismatch repair MutS family.

Its function is as follows. This protein is involved in the repair of mismatches in DNA. It is possible that it carries out the mismatch recognition step. This protein has a weak ATPase activity. This Streptococcus pyogenes serotype M49 (strain NZ131) protein is DNA mismatch repair protein MutS.